Here is a 154-residue protein sequence, read N- to C-terminus: Transcriptional repressor NrdR (154 aa).

Residues 3-34 (CPYCQSEDTQVKDSRPAEDGAAIRRRRACPVC) fold into a zinc finger. Positions 49-139 (LVVVKRTGRK…VYRNFREAKD (91 aa)) constitute an ATP-cone domain.

The protein belongs to the NrdR family. Zn(2+) is required as a cofactor.

In terms of biological role, negatively regulates transcription of bacterial ribonucleotide reductase nrd genes and operons by binding to NrdR-boxes. The polypeptide is Transcriptional repressor NrdR (Chelativorans sp. (strain BNC1)).